The following is a 258-amino-acid chain: 6-phosphogluconolactonase (258 aa).

N-acetylalanine is present on Ala-2. Ser-49 carries the post-translational modification Phosphoserine. Position 180 is an N6-acetyllysine (Lys-180).

The protein belongs to the glucosamine/galactosamine-6-phosphate isomerase family. 6-phosphogluconolactonase subfamily.

It is found in the cytoplasm. It carries out the reaction 6-phospho-D-glucono-1,5-lactone + H2O = 6-phospho-D-gluconate + H(+). It functions in the pathway carbohydrate degradation; pentose phosphate pathway; D-ribulose 5-phosphate from D-glucose 6-phosphate (oxidative stage): step 2/3. Functionally, hydrolysis of 6-phosphogluconolactone to 6-phosphogluconate. This Homo sapiens (Human) protein is 6-phosphogluconolactonase.